Consider the following 212-residue polypeptide: Pyridoxine/pyridoxamine 5'-phosphate oxidase (212 aa).

Residues 1-20 (MSDSAMEPQNPLTSGDFTAA) form a disordered region. Residues 59–64 (RMVLLK), 74–75 (YT), K81, and Q103 contribute to the FMN site. K64 serves as a coordination point for substrate. Substrate is bound by residues Y121, R125, and S129. FMN-binding positions include 138-139 (QS) and W183. 189-191 (RLH) contacts substrate. An FMN-binding site is contributed by R193.

Belongs to the pyridoxamine 5'-phosphate oxidase family. Homodimer. FMN is required as a cofactor.

The enzyme catalyses pyridoxamine 5'-phosphate + O2 + H2O = pyridoxal 5'-phosphate + H2O2 + NH4(+). It catalyses the reaction pyridoxine 5'-phosphate + O2 = pyridoxal 5'-phosphate + H2O2. Its pathway is cofactor metabolism; pyridoxal 5'-phosphate salvage; pyridoxal 5'-phosphate from pyridoxamine 5'-phosphate: step 1/1. It functions in the pathway cofactor metabolism; pyridoxal 5'-phosphate salvage; pyridoxal 5'-phosphate from pyridoxine 5'-phosphate: step 1/1. In terms of biological role, catalyzes the oxidation of either pyridoxine 5'-phosphate (PNP) or pyridoxamine 5'-phosphate (PMP) into pyridoxal 5'-phosphate (PLP). The protein is Pyridoxine/pyridoxamine 5'-phosphate oxidase of Azorhizobium caulinodans (strain ATCC 43989 / DSM 5975 / JCM 20966 / LMG 6465 / NBRC 14845 / NCIMB 13405 / ORS 571).